The following is a 472-amino-acid chain: FAD-linked oxidoreductase azaL (472 aa).

A signal peptide spans 1-18; sequence MFRTILLCSLGLTTLSSA. 11 N-linked (GlcNAc...) asparagine glycosylation sites follow: asparagine 22, asparagine 44, asparagine 102, asparagine 123, asparagine 227, asparagine 246, asparagine 273, asparagine 305, asparagine 318, asparagine 390, and asparagine 415. Residues 54–228 enclose the FAD-binding PCMH-type domain; the sequence is TTYDAPTYIG…TSATYKIYNA (175 aa).

Belongs to the oxygen-dependent FAD-linked oxidoreductase family.

The protein operates within secondary metabolite biosynthesis. Its function is as follows. FAD-linked oxidoreductase; part of the gene cluster that mediates the biosynthesis of azaphilones, a class of fungal metabolites characterized by a highly oxygenated pyrano-quinone bicyclic core and exhibiting a broad range of bioactivities. In the first step, the non-reducing polyketide synthase azaA forms the hexaketide precursor from successive condensations of five malonyl-CoA units, presumably with a simple acetyl-CoA starter unit. The reactive polyketide chain then undergoes a PT-mediated C2-C7 cyclization to afford the aromatic ring and is eventually released as an aldehyde through the R-domain. The putative ketoreductase azaE is proposed to catalyze the reduction of the terminal ketone resulting in the early culture product FK17-P2a. The monooxygenase azaH was demonstrated to be the only enzyme required to convert FK17-P2a to azanigerone E. AzaH first hydroxylates the benzaldehyde intermediate FK17-P2a at C4, which triggers the formation of the pyran-ring to afford azanigerone E. In parallel, the 2,4-dimethylhexanoyl chain is synthesized by the HR-PKS azaB and is proposed to be transferred to the C4-hydroxyl of azanigerone E by the acyltransferase azaD directly from the ACP domain of azaB. Alternatively, the 2,4-dimethyl-hexanoyl chain may be offloaded from the HR-PKS as a carboxylic acid and converted to an acyl-CoA by azaF. The resulting acyl-CoA molecule could then be taken up as a substrate by AzaD to form azanigerone B. To yield the carboxylic acid substituent in azanigerone A, the hydroxypropyl side chain of azanigerone B would need to undergo a C-C oxidative cleavage catalyzed by cytochrome P450 AzaI. AzaI is proposed to act on a vicinal diol that leads to a C-C bond scission either through an alkoxyradical intermediate or a peroxy complex. In the biosynthesis of azanigerone A, azanigerone B first undergoes hydroxylation at C10, possibly catalyzed by one of the two FAD-dependent monooxygenases encoded in the cluster, azaG or azaL, resulting in the vicinal diol azanigerone C. Oxidative cleavage of azanigerone C by azaI would yield the corresponding aldehyde derivative of azanigerone A. Finally, the dehydrogenase azaJ is proposed to convert the aldehyde functional group into the carboxylic acid, completing the conversion from azanigerone B to azanigerone A. Alternatively, the oxidation of aldehyde to carboxylic acid may be catalyzed by the same P450 enzyme azaI via consecutive oxidation or by endogenous alcohol dehydrogenase. In Aspergillus niger (strain ATCC 1015 / CBS 113.46 / FGSC A1144 / LSHB Ac4 / NCTC 3858a / NRRL 328 / USDA 3528.7), this protein is FAD-linked oxidoreductase azaL.